Here is a 185-residue protein sequence, read N- to C-terminus: Protein C2-DOMAIN ABA-RELATED 9 (185 aa).

The C2 domain maps to 1 to 104; sequence MEDKPLGILR…LEAHQMELDF (104 aa). Arginine 22, aspartate 23, aspartate 28, aspartate 74, lysine 75, aspartate 76, and aspartate 82 together coordinate Ca(2+).

The protein belongs to the plant CAR protein family. In terms of assembly, binds to PYR/PYL/RCAR abscisic acid intracellular receptors in an ABA-independent manner, both at the plasma membrane and in the nucleus. Interacts with LOT1 in the nuleus; this interaction is repressed by abscisic acid (ABA) and is sensitive to calcium ion Ca(2+), leading to free CAR9 accumulation at the plasma membrane. Requires Ca(2+) as cofactor.

Its subcellular location is the cell membrane. The protein localises to the nucleus. In terms of biological role, stimulates the GTPase/ATPase activities of Obg-like ATPases. Mediates the transient calcium-dependent interaction of PYR/PYL/RCAR abscisic acid (ABA) receptors with the plasma membrane and thus regulates ABA sensitivity. The protein is Protein C2-DOMAIN ABA-RELATED 9 of Arabidopsis thaliana (Mouse-ear cress).